A 25-amino-acid polypeptide reads, in one-letter code: Caerin-1.18 (25 aa).

Leucine 25 bears the Leucine amide mark.

Expressed by the skin dorsal glands.

The protein localises to the secreted. In terms of biological role, shows significant activity against Gram-positive organisms, but is less effective against Gram-negative organisms. This is Caerin-1.18 from Ranoidea gracilenta (Dainty green tree frog).